Consider the following 398-residue polypeptide: Elongation factor Tu (398 aa).

The tr-type G domain occupies 10 to 208; it reads KPHVNVGTIG…ALDDYIPEPE (199 aa). Positions 19–26 are G1; the sequence is GHVDHGKT. 19-26 is a GTP binding site; it reads GHVDHGKT. Thr26 serves as a coordination point for Mg(2+). Residues 61–65 form a G2 region; it reads GITIA. Positions 82 to 85 are G3; it reads DCPG. GTP-binding positions include 82–86 and 137–140; these read DCPGH and NKAD. The interval 137–140 is G4; it reads NKAD. Residues 175-177 form a G5 region; sequence SAL.

Belongs to the TRAFAC class translation factor GTPase superfamily. Classic translation factor GTPase family. EF-Tu/EF-1A subfamily. In terms of assembly, monomer.

It localises to the cytoplasm. It catalyses the reaction GTP + H2O = GDP + phosphate + H(+). Functionally, GTP hydrolase that promotes the GTP-dependent binding of aminoacyl-tRNA to the A-site of ribosomes during protein biosynthesis. This Marinobacter nauticus (strain ATCC 700491 / DSM 11845 / VT8) (Marinobacter aquaeolei) protein is Elongation factor Tu.